The sequence spans 358 residues: Protein PXR1 (358 aa).

2 disordered regions span residues 1 to 26 and 146 to 342; these read MGLA…NNTS and EVKT…KSAT. Residues 11-26 show a composition bias toward polar residues; it reads KISNDPQNTTWANNTS. Positions 25–79 constitute a G-patch domain; that stretch reads TSRFGHRILTSQGWQPGDSLGASDAAHAAHYTVASQSHIRVLLKDDNLGLGAKRG. Basic and acidic residues-rich tracts occupy residues 146-171 and 199-217; these read EVKT…EDDR and SMDL…SSKD. Basic residues predominate over residues 218–227; the sequence is KKGKKSKKDK. A compositionally biased stretch (acidic residues) spans 287-299; sequence DVEDLSSESEDES. Residues 300 to 315 show a composition bias toward polar residues; sequence TPSASRPATGTSTPTV. The span at 328 to 339 shows a compositional bias: basic residues; sequence HSVRQKWIRSKK.

It belongs to the PINX1 family.

Its subcellular location is the nucleus. It localises to the nucleolus. Its function is as follows. Involved in rRNA-processing at A0, A1 and A2 sites and negatively regulates telomerase. The sequence is that of Protein PXR1 (PXR1) from Phaeosphaeria nodorum (strain SN15 / ATCC MYA-4574 / FGSC 10173) (Glume blotch fungus).